Here is a 326-residue protein sequence, read N- to C-terminus: MIARIWSGESPLWRLLLPLSWLYGLVSGVIRLSYQLGWQKAWRAPVPVVVVGNLTAGGNGKTPVVIWLVEQLQQRGIRVGVVSRGYGGKAERYPLVLDDRTSTALAGDEPVLIHQRTGAPVAVAPLRSDAVKALLSAHDLQMIVTDDGLQHYKLARDREIVVIDGVRRFGNGWWLPAGPMRERASRLQSVDAVIVNGGVARPGEIPMRLRPGMAVNLLTGERRDVSTFTNVVAMAGIGHPPRFFATLESCGVQPVKTVALADHQALSQADVAALVTADQTLLMTEKDAVKCRDFAAANWWYLPVDAIMADERAQRLLADLATLAQR.

55–62 (TAGGNGKT) lines the ATP pocket.

It belongs to the LpxK family.

The enzyme catalyses a lipid A disaccharide + ATP = a lipid IVA + ADP + H(+). It functions in the pathway glycolipid biosynthesis; lipid IV(A) biosynthesis; lipid IV(A) from (3R)-3-hydroxytetradecanoyl-[acyl-carrier-protein] and UDP-N-acetyl-alpha-D-glucosamine: step 6/6. Functionally, transfers the gamma-phosphate of ATP to the 4'-position of a tetraacyldisaccharide 1-phosphate intermediate (termed DS-1-P) to form tetraacyldisaccharide 1,4'-bis-phosphate (lipid IVA). This chain is Tetraacyldisaccharide 4'-kinase, found in Klebsiella pneumoniae subsp. pneumoniae (strain ATCC 700721 / MGH 78578).